Consider the following 451-residue polypeptide: Serine--tRNA ligase (451 aa).

Thr258 to Glu260 is a binding site for L-serine. Arg289–Glu291 is an ATP binding site. Residue Glu312 participates in L-serine binding. Residue Glu376–Ser379 participates in ATP binding. Position 411 (Ser411) interacts with L-serine.

The protein belongs to the class-II aminoacyl-tRNA synthetase family. Type-1 seryl-tRNA synthetase subfamily. As to quaternary structure, homodimer. The tRNA molecule binds across the dimer.

The protein localises to the cytoplasm. The catalysed reaction is tRNA(Ser) + L-serine + ATP = L-seryl-tRNA(Ser) + AMP + diphosphate + H(+). It carries out the reaction tRNA(Sec) + L-serine + ATP = L-seryl-tRNA(Sec) + AMP + diphosphate + H(+). The protein operates within aminoacyl-tRNA biosynthesis; selenocysteinyl-tRNA(Sec) biosynthesis; L-seryl-tRNA(Sec) from L-serine and tRNA(Sec): step 1/1. Its function is as follows. Catalyzes the attachment of serine to tRNA(Ser). Is also able to aminoacylate tRNA(Sec) with serine, to form the misacylated tRNA L-seryl-tRNA(Sec), which will be further converted into selenocysteinyl-tRNA(Sec). In Bordetella bronchiseptica (strain ATCC BAA-588 / NCTC 13252 / RB50) (Alcaligenes bronchisepticus), this protein is Serine--tRNA ligase.